The following is a 546-amino-acid chain: Carboxylic ester hydrolase FVEG_12634 (546 aa).

The segment at 72 to 91 (FTDGTKICPQPPSSNTPDPS) is disordered. Serine 214 serves as the catalytic Acyl-ester intermediate.

The protein belongs to the type-B carboxylesterase/lipase family.

It carries out the reaction a carboxylic ester + H2O = an alcohol + a carboxylate + H(+). Carboxylic ester hydrolase; part of the Fusarium detoxification of benzoxazolinone cluster 2 (FDB2) involved in the degradation of benzoxazolinones produced by the host plant. Maize, wheat, and rye produce the 2 benzoxazinone phytoanticipins 2,4-dihy-droxy-7-methoxy-1,4-benzoxazin-3-one (DIMBOA) and 2,4-dihydroxy-1,4-benzoxazin-3-one (DIBOA) that, due to their inherent instability once released, spontaneously degrade to the more stable corresponding benzoxazolinones, 6-methoxy-2-benzoxazolinone (MBOA) and 2-benzoxazolinone (BOA), respectively. The first step in the detoxification of benzoxazolinones involves the hydrolysis of the cyclic ester bond of benzoxazolinones by the FDB1 cluster gamma-lactamase MBL1 to aminophenols. MBL1 is able to convert BOA into 2-aminophenol (2-AP), as well as MBOA into 5-methoxy-2-aminophenol (2-AMP). The FDB2 cluster N-malonyltransferase FDB2/NAT1 then metabolizes aminophenols via N-malonylation to non-toxic malonamic acids. FDB2/NAT1 converts 2-AP into N-(2-hydroxyphenyl) malonamic acid (HPMA) and 2-AMP into N-(2-hydroxy-4-methoxyphenyl) malonamic acid (HMPMA). The duplicated dienlactone hydrolases DLH1 and DLH2 may provide redundant function for hydrolyzing the lactone moiety in the BOA molecule. The roles of the amidases an other enzymes encoded by the 2 FDB clusters have not been identified so far. The protein is Carboxylic ester hydrolase FVEG_12634 of Gibberella moniliformis (strain M3125 / FGSC 7600) (Maize ear and stalk rot fungus).